The chain runs to 201 residues: MSGRSVRAETRSRAKDDIKRVMAAIEKVRKWEKKWVTVGDTSLRIYKWVPVTEPKSDDNKNKKKGKDDKYGSEVTTPENSSSPGMMDMHDDNSNQSSIADSSPLKQETSNNTSPAPEPMAASQNDSSDLKNDQYPSKQPSSGQDHKSEQNHCSSESMTSKRDSKSQGDSESFLDSSKSAQELEDGAPPSKKGKIDSSSEES.

The tract at residues 46–201 (YKWVPVTEPK…GKIDSSSEES (156 aa)) is disordered. Residues 54 to 71 (PKSDDNKNKKKGKDDKYG) are compositionally biased toward basic and acidic residues. Composition is skewed to polar residues over residues 73–83 (EVTTPENSSSP), 93–114 (SNQSSIADSSPLKQETSNNTSP), and 133–142 (QYPSKQPSSG). A compositionally biased stretch (basic and acidic residues) spans 158–167 (TSKRDSKSQG). Polar residues predominate over residues 168–179 (DSESFLDSSKSA). Positions 192 to 201 (GKIDSSSEES) are enriched in basic and acidic residues.

This sequence belongs to the BCL7 family.

In Danio rerio (Zebrafish), this protein is B-cell CLL/lymphoma 7 protein family member A (bcl7a).